Consider the following 428-residue polypeptide: Aerobic C4-dicarboxylate transport protein (428 aa).

A run of 9 helical transmembrane segments spans residues 5-27 (LFKS…GHYY), 47-64 (MIIA…IAGM), 77-99 (ALLY…VNVV), 141-163 (VIGA…FGFA), 184-206 (VIFG…AMAF), 216-238 (LVQL…VVVL), 289-311 (VVGL…YLTM), 326-348 (IFHQ…GVTG), and 353-375 (VLAA…ILGI).

It belongs to the dicarboxylate/amino acid:cation symporter (DAACS) (TC 2.A.23) family.

It is found in the cell inner membrane. Functionally, responsible for the transport of dicarboxylates such as succinate, fumarate, and malate from the periplasm across the inner membrane. The polypeptide is Aerobic C4-dicarboxylate transport protein (dctA) (Salmonella typhimurium (strain LT2 / SGSC1412 / ATCC 700720)).